A 236-amino-acid chain; its full sequence is Eukaryotic translation initiation factor 3 subunit J (236 aa).

The tract at residues 1–86 (MADDWESAAD…KEEEEQKRLA (86 aa)) is disordered. Residues 28-46 (GEDDDEDVKESWEDEEEKK) are compositionally biased toward acidic residues. 2 stretches are compositionally biased toward basic and acidic residues: residues 47-58 (DEEKPTKTEAPV) and 68-86 (AKLE…KRLA). Residues 61–115 (KPNKALKAKLEEQERLKEEEEQKRLAEMTPEEKLAEKLRLQKIQEESDLKSALET) adopt a coiled-coil conformation.

Belongs to the eIF-3 subunit J family. In terms of assembly, component of the eukaryotic translation initiation factor 3 (eIF-3) complex. The eIF-3 complex interacts with pix.

It localises to the cytoplasm. Component of the eukaryotic translation initiation factor 3 (eIF-3) complex, which is involved in protein synthesis of a specialized repertoire of mRNAs and, together with other initiation factors, stimulates binding of mRNA and methionyl-tRNAi to the 40S ribosome. The eIF-3 complex specifically targets and initiates translation of a subset of mRNAs involved in cell proliferation. The sequence is that of Eukaryotic translation initiation factor 3 subunit J from Drosophila mojavensis (Fruit fly).